We begin with the raw amino-acid sequence, 432 residues long: Amino-acid acetyltransferase (432 aa).

Residues 286–425 (ERVREAAIED…ASLYNYQRNS (140 aa)) form the N-acetyltransferase domain.

This sequence belongs to the acetyltransferase family. ArgA subfamily.

It is found in the cytoplasm. It carries out the reaction L-glutamate + acetyl-CoA = N-acetyl-L-glutamate + CoA + H(+). Its pathway is amino-acid biosynthesis; L-arginine biosynthesis; N(2)-acetyl-L-ornithine from L-glutamate: step 1/4. The polypeptide is Amino-acid acetyltransferase (Pseudomonas fluorescens (strain ATCC BAA-477 / NRRL B-23932 / Pf-5)).